The sequence spans 425 residues: Tryptophan synthase beta chain (425 aa).

Lysine 107 is subject to N6-(pyridoxal phosphate)lysine.

Belongs to the TrpB family. In terms of assembly, tetramer of two alpha and two beta chains. It depends on pyridoxal 5'-phosphate as a cofactor.

The enzyme catalyses (1S,2R)-1-C-(indol-3-yl)glycerol 3-phosphate + L-serine = D-glyceraldehyde 3-phosphate + L-tryptophan + H2O. The protein operates within amino-acid biosynthesis; L-tryptophan biosynthesis; L-tryptophan from chorismate: step 5/5. Its function is as follows. The beta subunit is responsible for the synthesis of L-tryptophan from indole and L-serine. In Synechococcus sp. (strain JA-2-3B'a(2-13)) (Cyanobacteria bacterium Yellowstone B-Prime), this protein is Tryptophan synthase beta chain.